Here is a 354-residue protein sequence, read N- to C-terminus: Lipoyl synthase, mitochondrial (354 aa).

[4Fe-4S] cluster-binding residues include C91, C96, C102, C122, C126, C129, and S337. The 220-residue stretch at 107–326 (DDSLATATIM…AEYSKKLGFL (220 aa)) folds into the Radical SAM core domain.

This sequence belongs to the radical SAM superfamily. Lipoyl synthase family. The cofactor is [4Fe-4S] cluster.

The protein localises to the mitochondrion. It catalyses the reaction [[Fe-S] cluster scaffold protein carrying a second [4Fe-4S](2+) cluster] + N(6)-octanoyl-L-lysyl-[protein] + 2 oxidized [2Fe-2S]-[ferredoxin] + 2 S-adenosyl-L-methionine + 4 H(+) = [[Fe-S] cluster scaffold protein] + N(6)-[(R)-dihydrolipoyl]-L-lysyl-[protein] + 4 Fe(3+) + 2 hydrogen sulfide + 2 5'-deoxyadenosine + 2 L-methionine + 2 reduced [2Fe-2S]-[ferredoxin]. It participates in protein modification; protein lipoylation via endogenous pathway; protein N(6)-(lipoyl)lysine from octanoyl-[acyl-carrier-protein]: step 2/2. Functionally, catalyzes the radical-mediated insertion of two sulfur atoms into the C-6 and C-8 positions of the octanoyl moiety bound to the lipoyl domains of lipoate-dependent enzymes, thereby converting the octanoylated domains into lipoylated derivatives. The sequence is that of Lipoyl synthase, mitochondrial from Caenorhabditis elegans.